Reading from the N-terminus, the 618-residue chain is MPIQVLPPQLANQIAAGEVVERPASVVKELVENSLDAGATRVDIDIERGGAKLIRIRDNGCGIKKEELALALARHATSKIASLDDLEAIISLGFRGEALASISSVSRLTLTSRTAEQAEAWQAYAEGRDMDVTVKPAAHPVGTTLEVLDLFYNTPARRKFMRTEKTEFNHIDEIIRRIALARFDVTLNLSHNGKLVRQYRAVAKDGQKERRLGAICGTPFLEQALAIEWQHGDLTLRGWVADPNHTTTALTEIQYCYVNGRMMRDRLINHAIRQACEDKLGADQQPAFVLYLEIDPHQVDVNVHPAKHEVRFHQSRLVHDFIYQGVLSVLQQQTETTLPLEDIAPAPRHVPENRIAAGRNHFAVPAEPTAAREPATPRYSGGASGGNGGRQSAGGWPHAQPGYQKQQGEVYRTLLQTPATSPAPEPVAPALDGHSQSFGRVLTIVGGDCALLEHAGTIQLLSLPVAERWLRQAQLTPGQSPVCAQPLLIPLRLKVSADEKVALQKAQSLLGELGIEFQSDAQHVTIRAVPLPLRQQNLQILIPELIGYLAQQTTFATVNIAQWIARNVQSEHPQWSMAQAISLLADVERLCPQLVKAPPGGLLQPVDLHSAMNALKHE.

Over residues 366-381 (AEPTAAREPATPRYSG) the composition is skewed to low complexity. A disordered region spans residues 366 to 403 (AEPTAAREPATPRYSGGASGGNGGRQSAGGWPHAQPGY). Over residues 382-392 (GASGGNGGRQS) the composition is skewed to gly residues.

The protein belongs to the DNA mismatch repair MutL/HexB family.

Functionally, this protein is involved in the repair of mismatches in DNA. It is required for dam-dependent methyl-directed DNA mismatch repair. May act as a 'molecular matchmaker', a protein that promotes the formation of a stable complex between two or more DNA-binding proteins in an ATP-dependent manner without itself being part of a final effector complex. The polypeptide is DNA mismatch repair protein MutL (Salmonella schwarzengrund (strain CVM19633)).